A 2319-amino-acid polypeptide reads, in one-letter code: Coagulation factor VIII (2319 aa).

Positions 1–19 (MQIALFACFFLSLFNFCSS) are cleaved as a signal peptide. Plastocyanin-like domains lie at 20 to 199 (AIRR…LLVC) and 207 to 349 (ERTQ…VDSC). Positions 20-349 (AIRRYYLGAV…MEAYVKVDSC (330 aa)) constitute an F5/8 type A 1 domain. Asn-61 carries N-linked (GlcNAc...) asparagine glycosylation. A disulfide bridge links Cys-173 with Cys-199. Residues Asn-233 and Asn-259 are each glycosylated (N-linked (GlcNAc...) asparagine). The residue at position 367 (Tyr-367) is a Sulfotyrosine. Plastocyanin-like domains follow at residues 399–573 (KTWI…LLIC) and 583–730 (NQMM…VSSC). Positions 399–730 (KTWIHYISAE…MTALLKVSSC (332 aa)) constitute an F5/8 type A 2 domain. The N-linked (GlcNAc...) asparagine glycan is linked to Asn-423. Cysteines 547 and 573 form a disulfide. Asn-601 carries N-linked (GlcNAc...) asparagine glycosylation. 3 positions are modified to sulfotyrosine: Tyr-737, Tyr-738, and Tyr-742. The b stretch occupies residues 760 to 1640 (SFFQNTNHPN…IPPVLKRHQR (881 aa)). N-linked (GlcNAc...) asparagine glycans are attached at residues Asn-880, Asn-958, Asn-1015, Asn-1022, Asn-1026, Asn-1044, Asn-1076, Asn-1087, Asn-1136, Asn-1161, Asn-1192, Asn-1255, Asn-1268, Asn-1273, Asn-1274, Asn-1302, Asn-1316, Asn-1340, and Asn-1378. A disordered region spans residues 1530–1549 (WNKAKRHGESIKGKTESSKN). Residues 1536-1548 (HGESIKGKTESSK) show a composition bias toward basic and acidic residues. Sulfotyrosine occurs at positions 1669 and 1687. Plastocyanin-like domains follow at residues 1683-1845 (KTRH…LLIC) and 1855-2008 (GRQV…SKQC). The 326-residue stretch at 1683–2008 (KTRHYFIAAV…TLFLVYSKQC (326 aa)) folds into the F5/8 type A 3 domain. N-linked (GlcNAc...) asparagine glycosylation is present at Asn-1797. Disulfide bonds link Cys-1819/Cys-1845, Cys-2008/Cys-2156, and Cys-2161/Cys-2313. 2 F5/8 type C domains span residues 2008–2156 (CQIP…LMGC) and 2161–2313 (CSIP…ILGC). Asn-2105 is a glycosylation site (N-linked (GlcNAc...) asparagine).

This sequence belongs to the multicopper oxidase family. In terms of assembly, interacts with vWF. vWF binding is essential for the stabilization of F8 in circulation. The binding of vWF and activation depend on the sulfation of Tyr-1669. Post-translationally, proteolytically cleaved by cathepsin CTSG to produce a partially activated form. In terms of tissue distribution, found in most tissues.

The protein localises to the secreted. It localises to the extracellular space. Its function is as follows. Factor VIII, along with calcium and phospholipid, acts as a cofactor for factor IXa when it converts factor X to the activated form, factor Xa. In Mus musculus (Mouse), this protein is Coagulation factor VIII (F8).